The sequence spans 404 residues: MSLCTLEINLSAIKNNYRLLQDICKTALVGAVVKANGYGLGAMQIAKALIKENCQYFFVATSEEGINLRKVLNNDITILVLNGVFTHDALELIQYNLTPVLNNLSQIEIWQKFSNLKGKILPCYLHFNTGLNRFGLNSDEIEQLINDRDLLKGLDLQYIISHLAASEETGNPYNLIQLNRFKVYLEYFPNVKASFANSGGIFLGQDYHFDLARPGAALYGLNSLIEVSSNLSYTEEFESNTAALTTTACINKCPDVSVRLTPKLPLKGSYTVRLQNPVTLKAPIIDLQNLTLDSHIGYNMTFTTKRDSVIATLPLGYADGFSRNFSSQGEVFINSCSVPIVGRVSMDLINIDVTDLPPSEVFLGQEAEIIGNYCTPDKIASIIGTIGYEVLTSLGSRYKRKYIS.

The active-site Proton acceptor; specific for D-alanine is the Lys-34. At Lys-34 the chain carries N6-(pyridoxal phosphate)lysine. Residue Arg-133 participates in substrate binding. An RPE1 insert domain is found at 226–273 (EVSSNLSYTEEFESNTAALTTTACINKCPDVSVRLTPKLPLKGSYTVR). Tyr-298 serves as the catalytic Proton acceptor; specific for L-alanine. Met-346 contributes to the substrate binding site.

Belongs to the alanine racemase family. Pyridoxal 5'-phosphate serves as cofactor.

It carries out the reaction L-alanine = D-alanine. Its pathway is amino-acid biosynthesis; D-alanine biosynthesis; D-alanine from L-alanine: step 1/1. Its function is as follows. Catalyzes the interconversion of L-alanine and D-alanine. May also act on other amino acids. This chain is Alanine racemase (alr), found in Rickettsia prowazekii (strain Madrid E).